The following is a 650-amino-acid chain: Probable E3 ubiquitin ligase complex SCF subunit scon-2 (650 aa).

Positions 124-170 (IDFISALPVELAQKVLCYLDTVSLTKAAQVSQRWRTLADSDAVWVRM) constitute an F-box domain. Residues 200–244 (QRQLAKGGPQGRVTELADSHDSQDRSVNQHGKRPAAEAEEEDPIK) are disordered. Residues 214–223 (ELADSHDSQD) show a composition bias toward basic and acidic residues. WD repeat units follow at residues 292–320 (GHEN…KIWN), 332–360 (GHTA…KVWN), 372–400 (AHTD…KIFD), 411–441 (GHSD…KLWD), and 453–488 (GHVG…AMSV). The disordered stretch occupies residues 482 to 525 (NQDAMSVSSGGSGSPSMSHAQIERAGSPGSHSSSHNLLPSSLPS). 2 stretches are compositionally biased toward low complexity: residues 487–499 (SVSS…PSMS) and 507–525 (GSPG…SLPS). WD repeat units lie at residues 528–564 (EDVR…RLWD), 576–604 (GHLE…KTWE), and 616–644 (GHCG…RLHS).

This sequence belongs to the WD repeat MET30/SCONB/SCON-2 family. Component of the SCF(scon-2) E3 ubiquitin ligase complex.

It functions in the pathway protein modification; protein ubiquitination. Its function is as follows. Component of the SCF(scon-2) E3 ubiquitin ligase complex involved in the regulation of sulfur metabolite repression, probably by mediating the inactivation or degradation of the metR transcription factor. This Neurospora crassa (strain ATCC 24698 / 74-OR23-1A / CBS 708.71 / DSM 1257 / FGSC 987) protein is Probable E3 ubiquitin ligase complex SCF subunit scon-2 (scon-2).